We begin with the raw amino-acid sequence, 592 residues long: UPF0329 protein ECU01_0110/ECU01_1500/ECU08_0040 (592 aa).

Composition is skewed to basic and acidic residues over residues 306-339 and 353-362; these read RQRR…SKEK and EAKEEEKKES. A disordered region spans residues 306-404; the sequence is RQRRREREIE…RKRYKIHRRV (99 aa).

The protein belongs to the UPF0329 family.

This Encephalitozoon cuniculi (strain GB-M1) (Microsporidian parasite) protein is UPF0329 protein ECU01_0110/ECU01_1500/ECU08_0040.